The primary structure comprises 165 residues: HTH-type transcriptional regulator IscR (165 aa).

An HTH rrf2-type domain is found at R2 to S131. The segment at residues L28–K51 is a DNA-binding region (H-T-H motif). [2Fe-2S] cluster-binding residues include C92, C98, and C104. Residues N144–A165 are disordered. Residues G153–A165 show a composition bias toward polar residues.

[2Fe-2S] cluster is required as a cofactor.

Its function is as follows. Regulates the transcription of several operons and genes involved in the biogenesis of Fe-S clusters and Fe-S-containing proteins. This Sodalis glossinidius (strain morsitans) protein is HTH-type transcriptional regulator IscR.